The chain runs to 310 residues: HPr kinase/phosphorylase (310 aa).

Catalysis depends on residues His138 and Lys159. 153–160 lines the ATP pocket; that stretch reads GKSGVGKS. Ser160 contacts Mg(2+). The Proton acceptor; for phosphorylation activity. Proton donor; for dephosphorylation activity role is filled by Asp177. An important for the catalytic mechanism of both phosphorylation and dephosphorylation region spans residues 201–210; sequence LEIRGLGIIN. Mg(2+) is bound at residue Glu202. Residue Arg243 is part of the active site. The important for the catalytic mechanism of dephosphorylation stretch occupies residues 264–269; sequence PVRPGR.

This sequence belongs to the HPrK/P family. Homohexamer. Mg(2+) is required as a cofactor.

It carries out the reaction [HPr protein]-L-serine + ATP = [HPr protein]-O-phospho-L-serine + ADP + H(+). It catalyses the reaction [HPr protein]-O-phospho-L-serine + phosphate + H(+) = [HPr protein]-L-serine + diphosphate. Catalyzes the ATP- as well as the pyrophosphate-dependent phosphorylation of a specific serine residue in HPr, a phosphocarrier protein of the phosphoenolpyruvate-dependent sugar phosphotransferase system (PTS). HprK/P also catalyzes the pyrophosphate-producing, inorganic phosphate-dependent dephosphorylation (phosphorolysis) of seryl-phosphorylated HPr (P-Ser-HPr). The two antagonistic activities of HprK/P are regulated by several intracellular metabolites, which change their concentration in response to the absence or presence of rapidly metabolisable carbon sources (glucose, fructose, etc.) in the growth medium. Also phosphorylates/dephosphorylates the HPr-like catabolite repression protein crh on a specific serine residue. Therefore, by controlling the phosphorylation state of HPr and crh, HPrK/P is a sensor enzyme that plays a major role in the regulation of carbon metabolism and sugar transport: it mediates carbon catabolite repression (CCR), and regulates PTS-catalyzed carbohydrate uptake and inducer exclusion. This Bacillus licheniformis (strain ATCC 14580 / DSM 13 / JCM 2505 / CCUG 7422 / NBRC 12200 / NCIMB 9375 / NCTC 10341 / NRRL NRS-1264 / Gibson 46) protein is HPr kinase/phosphorylase.